The following is a 131-amino-acid chain: uncharacterized protein (131 aa).

This is an uncharacterized protein from Caenorhabditis elegans.